A 762-amino-acid chain; its full sequence is 5-methyltetrahydropteroyltriglutamate--homocysteine methyltransferase (762 aa).

Residues 17–20 (REWK) and K111 contribute to the 5-methyltetrahydropteroyltri-L-glutamate site. L-homocysteine is bound by residues 435–437 (IGS) and E488. L-methionine contacts are provided by residues 435-437 (IGS) and E488. 5-methyltetrahydropteroyltri-L-glutamate-binding positions include 519–520 (RC) and W565. An L-homocysteine-binding site is contributed by D603. Position 603 (D603) interacts with L-methionine. A 5-methyltetrahydropteroyltri-L-glutamate-binding site is contributed by E609. Zn(2+) is bound by residues H645, C647, and E669. Residue H698 is the Proton donor of the active site. C730 serves as a coordination point for Zn(2+).

Belongs to the vitamin-B12 independent methionine synthase family. Zn(2+) is required as a cofactor.

It catalyses the reaction 5-methyltetrahydropteroyltri-L-glutamate + L-homocysteine = tetrahydropteroyltri-L-glutamate + L-methionine. It functions in the pathway amino-acid biosynthesis; L-methionine biosynthesis via de novo pathway; L-methionine from L-homocysteine (MetE route): step 1/1. In terms of biological role, catalyzes the transfer of a methyl group from 5-methyltetrahydrofolate to homocysteine resulting in methionine formation. In Bacillus cereus (strain ATCC 14579 / DSM 31 / CCUG 7414 / JCM 2152 / NBRC 15305 / NCIMB 9373 / NCTC 2599 / NRRL B-3711), this protein is 5-methyltetrahydropteroyltriglutamate--homocysteine methyltransferase.